The primary structure comprises 144 residues: Large ribosomal subunit protein uL13 (144 aa).

It belongs to the universal ribosomal protein uL13 family. In terms of assembly, part of the 50S ribosomal subunit.

In terms of biological role, this protein is one of the early assembly proteins of the 50S ribosomal subunit, although it is not seen to bind rRNA by itself. It is important during the early stages of 50S assembly. The sequence is that of Large ribosomal subunit protein uL13 from Mycoplasmopsis pulmonis (strain UAB CTIP) (Mycoplasma pulmonis).